The primary structure comprises 273 residues: NH(3)-dependent NAD(+) synthetase (273 aa).

Residue 47–54 (GISGGQDS) coordinates ATP. Asp-53 serves as a coordination point for Mg(2+). Arg-139 is a binding site for deamido-NAD(+). Residue Thr-159 participates in ATP binding. Residue Glu-164 participates in Mg(2+) binding. Deamido-NAD(+) is bound by residues Lys-172 and Asp-179. The ATP site is built by Lys-188 and Thr-210. A deamido-NAD(+)-binding site is contributed by 259 to 260 (HK).

This sequence belongs to the NAD synthetase family. In terms of assembly, homodimer.

The catalysed reaction is deamido-NAD(+) + NH4(+) + ATP = AMP + diphosphate + NAD(+) + H(+). The protein operates within cofactor biosynthesis; NAD(+) biosynthesis; NAD(+) from deamido-NAD(+) (ammonia route): step 1/1. Its function is as follows. Catalyzes the ATP-dependent amidation of deamido-NAD to form NAD. Uses ammonia as a nitrogen source. The polypeptide is NH(3)-dependent NAD(+) synthetase (Staphylococcus saprophyticus subsp. saprophyticus (strain ATCC 15305 / DSM 20229 / NCIMB 8711 / NCTC 7292 / S-41)).